Reading from the N-terminus, the 80-residue chain is 14-3-3-like protein 1 (80 aa).

The protein belongs to the 14-3-3 family.

In Pseudotsuga menziesii (Douglas-fir), this protein is 14-3-3-like protein 1.